Here is a 284-residue protein sequence, read N- to C-terminus: Bifunctional protein FolD (284 aa).

Residues 164 to 166 and Ser-189 contribute to the NADP(+) site; that span reads GRS.

This sequence belongs to the tetrahydrofolate dehydrogenase/cyclohydrolase family. As to quaternary structure, homodimer.

The enzyme catalyses (6R)-5,10-methylene-5,6,7,8-tetrahydrofolate + NADP(+) = (6R)-5,10-methenyltetrahydrofolate + NADPH. It catalyses the reaction (6R)-5,10-methenyltetrahydrofolate + H2O = (6R)-10-formyltetrahydrofolate + H(+). It functions in the pathway one-carbon metabolism; tetrahydrofolate interconversion. Catalyzes the oxidation of 5,10-methylenetetrahydrofolate to 5,10-methenyltetrahydrofolate and then the hydrolysis of 5,10-methenyltetrahydrofolate to 10-formyltetrahydrofolate. The chain is Bifunctional protein FolD from Listeria welshimeri serovar 6b (strain ATCC 35897 / DSM 20650 / CCUG 15529 / CIP 8149 / NCTC 11857 / SLCC 5334 / V8).